Here is a 359-residue protein sequence, read N- to C-terminus: Golgi-resident adenosine 3',5'-bisphosphate 3'-phosphatase (359 aa).

Met1 carries the N-acetylmethionine modification. Topologically, residues 1 to 12 (MAPMGIRLSPLG) are cytoplasmic. Residues 13–33 (VAVFCLLGLGVLYHLYSGFLA) form a helical membrane-spanning segment. The Lumenal portion of the chain corresponds to 34–359 (GRFSLFGLGG…LPDLEKTGHK (326 aa)). The disordered stretch occupies residues 86–106 (ESNVLHEKSKGKTREGAEDKM). The active-site Proton acceptor is the Asp110. Residues Glu133, Asp174, Leu176, and Asp177 each contribute to the Mg(2+) site. Residue Thr179 is the Proton acceptor of the active site. Residues Ser242 and His245 each contribute to the AMP site. Asn259 carries an N-linked (GlcNAc...) asparagine glycan. AMP is bound by residues Gly268 and Lys272. Asp300 contacts Mg(2+).

This sequence belongs to the inositol monophosphatase superfamily. Mg(2+) serves as cofactor. Post-translationally, contains N-linked glycan resistant to endoglycosydase H.

It is found in the golgi apparatus. The protein localises to the trans-Golgi network membrane. The enzyme catalyses adenosine 3',5'-bisphosphate + H2O = AMP + phosphate. It participates in sulfur metabolism. Its activity is regulated as follows. Strongly inhibited by lithium. In terms of biological role, exhibits 3'-nucleotidase activity toward adenosine 3',5'-bisphosphate (PAP), namely hydrolyzes adenosine 3',5'-bisphosphate into adenosine 5'-monophosphate (AMP) and a phosphate. May play a role in the formation of skeletal elements derived through endochondral ossification, possibly by clearing adenosine 3',5'-bisphosphate produced by Golgi sulfotransferases during glycosaminoglycan sulfation. Has no activity toward 3'-phosphoadenosine 5'-phosphosulfate (PAPS) or inositol phosphate (IP) substrates including I(1)P, I(1,4)P2, I(1,3,4)P3, I(1,4,5)P3 and I(1,3,4,5)P4. The polypeptide is Golgi-resident adenosine 3',5'-bisphosphate 3'-phosphatase (Homo sapiens (Human)).